We begin with the raw amino-acid sequence, 190 residues long: Putative CRISPR system CMR subunit Cmr7 2 (190 aa).

It belongs to the CRISPR system Cmr7 family. In terms of assembly, homodimer.

CRISPR (clustered regularly interspaced short palindromic repeat) is an adaptive immune system that provides protection against mobile genetic elements (viruses, transposable elements and conjugative plasmids). CRISPR clusters contain spacers, sequences complementary to antecedent mobile elements, and target invading nucleic acids. CRISPR clusters are transcribed and processed into CRISPR RNA (crRNA). In Saccharolobus solfataricus (strain ATCC 35092 / DSM 1617 / JCM 11322 / P2) (Sulfolobus solfataricus), this protein is Putative CRISPR system CMR subunit Cmr7 2 (cmr7b).